The following is a 123-amino-acid chain: Antitoxin RnlB (123 aa).

As to quaternary structure, can form a complex with cognate toxin RnlA. Post-translationally, probably degraded by CplXP and Lon proteases.

Its function is as follows. Antitoxin component of a type II toxin-antitoxin (TA) system. A labile antitoxin (half-life of 2.1 minutes) that inhibits the endonuclease activity of cognate toxin RnlA but not that of non-cognate toxin LsoA. The protein is Antitoxin RnlB (rnlB) of Escherichia coli (strain K12).